The primary structure comprises 295 residues: Ethanolamine ammonia-lyase small subunit (295 aa).

3 residues coordinate adenosylcob(III)alamin: Val207, Glu228, and Cys258.

This sequence belongs to the EutC family. The basic unit is a heterodimer which dimerizes to form tetramers. The heterotetramers trimerize; 6 large subunits form a core ring with 6 small subunits projecting outwards. Adenosylcob(III)alamin is required as a cofactor.

Its subcellular location is the bacterial microcompartment. The catalysed reaction is ethanolamine = acetaldehyde + NH4(+). Its pathway is amine and polyamine degradation; ethanolamine degradation. In terms of biological role, catalyzes the deamination of various vicinal amino-alcohols to oxo compounds. Allows this organism to utilize ethanolamine as the sole source of nitrogen and carbon in the presence of external vitamin B12. The protein is Ethanolamine ammonia-lyase small subunit of Escherichia coli (strain UTI89 / UPEC).